The sequence spans 201 residues: Peptidyl-tRNA hydrolase (201 aa).

Tyr14 lines the tRNA pocket. His19 functions as the Proton acceptor in the catalytic mechanism. Tyr64, Asn66, and Asn112 together coordinate tRNA.

This sequence belongs to the PTH family. Monomer.

It localises to the cytoplasm. It carries out the reaction an N-acyl-L-alpha-aminoacyl-tRNA + H2O = an N-acyl-L-amino acid + a tRNA + H(+). In terms of biological role, hydrolyzes ribosome-free peptidyl-tRNAs (with 1 or more amino acids incorporated), which drop off the ribosome during protein synthesis, or as a result of ribosome stalling. Its function is as follows. Catalyzes the release of premature peptidyl moieties from peptidyl-tRNA molecules trapped in stalled 50S ribosomal subunits, and thus maintains levels of free tRNAs and 50S ribosomes. The sequence is that of Peptidyl-tRNA hydrolase from Afipia carboxidovorans (strain ATCC 49405 / DSM 1227 / KCTC 32145 / OM5) (Oligotropha carboxidovorans).